The chain runs to 84 residues: Small ribosomal subunit protein bS18 (84 aa).

This sequence belongs to the bacterial ribosomal protein bS18 family. In terms of assembly, part of the 30S ribosomal subunit. Forms a tight heterodimer with protein bS6.

Functionally, binds as a heterodimer with protein bS6 to the central domain of the 16S rRNA, where it helps stabilize the platform of the 30S subunit. The chain is Small ribosomal subunit protein bS18 from Vesicomyosocius okutanii subsp. Calyptogena okutanii (strain HA).